The primary structure comprises 360 residues: GTPase Obg (360 aa).

The 156-residue stretch at 1–156 (MFVDSVEIII…KCVRLELKLI (156 aa)) folds into the Obg domain. Residues 157–360 (ADIGLVGFPN…LKFVLLEALP (204 aa)) enclose the OBG-type G domain. GTP contacts are provided by residues 163–170 (GFPNAGKS), 188–192 (FTTLV), 210–213 (DIPG), 279–282 (NKCD), and 341–343 (SAV). Mg(2+)-binding residues include serine 170 and threonine 190.

The protein belongs to the TRAFAC class OBG-HflX-like GTPase superfamily. OBG GTPase family. Monomer. The cofactor is Mg(2+).

Its subcellular location is the cytoplasm. Functionally, an essential GTPase which binds GTP, GDP and possibly (p)ppGpp with moderate affinity, with high nucleotide exchange rates and a fairly low GTP hydrolysis rate. Plays a role in control of the cell cycle, stress response, ribosome biogenesis and in those bacteria that undergo differentiation, in morphogenesis control. This chain is GTPase Obg, found in Helicobacter pylori (strain HPAG1).